The sequence spans 160 residues: Protein-export protein SecB (160 aa).

Belongs to the SecB family. In terms of assembly, homotetramer, a dimer of dimers. One homotetramer interacts with 1 SecA dimer.

Its subcellular location is the cytoplasm. In terms of biological role, one of the proteins required for the normal export of preproteins out of the cell cytoplasm. It is a molecular chaperone that binds to a subset of precursor proteins, maintaining them in a translocation-competent state. It also specifically binds to its receptor SecA. This chain is Protein-export protein SecB, found in Rhizobium johnstonii (strain DSM 114642 / LMG 32736 / 3841) (Rhizobium leguminosarum bv. viciae).